Here is a 126-residue protein sequence, read N- to C-terminus: Large ribosomal subunit protein bL12 (126 aa).

Belongs to the bacterial ribosomal protein bL12 family. As to quaternary structure, homodimer. Part of the ribosomal stalk of the 50S ribosomal subunit. Forms a multimeric L10(L12)X complex, where L10 forms an elongated spine to which 2 to 4 L12 dimers bind in a sequential fashion. Binds GTP-bound translation factors.

In terms of biological role, forms part of the ribosomal stalk which helps the ribosome interact with GTP-bound translation factors. Is thus essential for accurate translation. The polypeptide is Large ribosomal subunit protein bL12 (Trichlorobacter lovleyi (strain ATCC BAA-1151 / DSM 17278 / SZ) (Geobacter lovleyi)).